A 526-amino-acid chain; its full sequence is Delayed-rectifier potassium channel regulatory subunit KCNS1 (526 aa).

Residues 1–217 (MLMLLVRGTH…LTMENPGYSL (217 aa)) are Cytoplasmic-facing. A helical membrane pass occupies residues 218 to 239 (PSKLFSCVSISVVLASIAAMCI). Over 240 to 270 (HSLPEYQAREAAAAVAAVAAGRSPEGVRDDP) the chain is Extracellular. A helical transmembrane segment spans residues 271 to 293 (VLRRLEYFCIAWFSFEVSSRLLL). Topologically, residues 294–304 (APSTRNFFCHP) are cytoplasmic. A helical membrane pass occupies residues 305–322 (LNLIDIVSVLPFYLTLLA). At 323 to 337 (GVALGDQGGKEFGHL) the chain is on the extracellular side. A helical; Voltage-sensor membrane pass occupies residues 338 to 358 (GKVVQVFRLMRIFRVLKLARH). The Cytoplasmic portion of the chain corresponds to 359–373 (STGLRSLGATLKHSY). A helical transmembrane segment spans residues 374 to 395 (REVGILLLYLAVGVSVFSGVAY). At 396–408 (TAEKEEDVGFNTI) the chain is on the extracellular side. The segment at residues 409–420 (PACWWWGTVSMT) is an intramembrane region (helical). Residues 421–426 (TVGYGD) carry the Selectivity filter motif. An intramembrane segment occupies 421-428 (TVGYGDVV). Over 429-435 (PVTVAGK) the chain is Extracellular. Residues 436-464 (LAASGCILGGILVVALPITIIFNKFSHFY) traverse the membrane as a helical segment. Residues 465–526 (RRQKALEAAV…PSEPPHPQMY (62 aa)) lie on the Cytoplasmic side of the membrane. Positions 491-526 (GVSEASLETSRETSQEGRSADLESQAPSEPPHPQMY) are disordered. The span at 499–511 (TSRETSQEGRSAD) shows a compositional bias: basic and acidic residues.

The protein belongs to the potassium channel family. S (TC 1.A.1.2) subfamily. Kv9.1/KCNS1 sub-subfamily. As to quaternary structure, heterotetramer with KCNB1. Heterotetramer with KCNB2. Does not form homomultimers.

The protein resides in the cell membrane. In terms of biological role, potassium channel regulatory subunit that modulate the delayed rectifier voltage-gated potassium channel activity of KCNB1 and KCNB2 by altering their kinetics, expression levels, and shifting the half-inactivation potential to more polarized values. While it does not form functional channels on its own, it can form functional heterotetrameric channels with KCNB1 and KCNB2. Each regulatory subunit has unique regulatory properties that can lead to extensive inhibition, significant changes in kinetics, and/or substantial shifts in the voltage dependencies of the inactivation process. In Pan troglodytes (Chimpanzee), this protein is Delayed-rectifier potassium channel regulatory subunit KCNS1.